The sequence spans 235 residues: Secretory carrier-associated membrane protein 5 (235 aa).

Topologically, residues 1–39 (MAEKVNNFPPLPKFIPLKPCFYQDFEADIPPQHVSMTKR) are cytoplasmic. The helical transmembrane segment at 40–60 (LYYLWMLNSVTLAVNLVGCLA) threads the bilayer. The Extracellular segment spans residues 61 to 67 (WLIGGGG). The helical transmembrane segment at 68-88 (ATNFGLAFLWLILFTPCSYVC) threads the bilayer. Residues 89-102 (WFRPIYKAFKTDSS) are Cytoplasmic-facing. The helical transmembrane segment at 103 to 125 (FSFMAFFFTFMAQLVISIIQAVG) threads the bilayer. Residues 126 to 148 (IPGWGVCGWIATISFFGTNIGSA) are Extracellular-facing. Residues 149 to 169 (VVMLIPTVMFTVMAVFSFIAL) form a helical membrane-spanning segment. Over 170–235 (SMVHKFYRGS…TPNYTYSNEM (66 aa)) the chain is Cytoplasmic.

The protein belongs to the SCAMP family. SCAMP5 subfamily. In terms of assembly, interacts (via C-terminal part) with SYT1 and SYT2; interaction with synaptotagmins making a link with the SNARE molecules. Interacts with SLC9A7. As to expression, expressed both by neuronal and non-neuronal tissues. Expressed in brain, stomach, thyroid, spinal cord, lymph node, trachea, adrenal gland, bone marrow and in the different parts of brain. In thyroid tissues, it is expressed by the follicular epithelial cells. In the adrenal gland tissues it is detected in the zona fasciculata of the cortex region (at protein level).

It localises to the cell membrane. It is found in the golgi apparatus membrane. The protein resides in the golgi apparatus. The protein localises to the trans-Golgi network membrane. Its subcellular location is the recycling endosome membrane. It localises to the cytoplasmic vesicle. It is found in the secretory vesicle. The protein resides in the synaptic vesicle membrane. Functionally, required for the calcium-dependent exocytosis of signal sequence-containing cytokines such as CCL5. Probably acts in cooperation with the SNARE machinery. May play a role in accumulation of expanded polyglutamine (polyQ) protein huntingtin (HTT) in case of endoplasmic reticulum stress by inhibiting the endocytosis pathway. This Homo sapiens (Human) protein is Secretory carrier-associated membrane protein 5 (SCAMP5).